The primary structure comprises 81 residues: CLAVATA3/ESR (CLE)-related protein 5 (81 aa).

An N-terminal signal peptide occupies residues 1–26 (MATLILKQTLIILLIIFSLQTLSSQA). Hydroxyproline occurs at positions 73 and 76. Pro-76 is a glycosylation site (O-linked (Ara...) hydroxyproline).

Belongs to the CLV3/ESR signal peptide family. In terms of processing, the O-glycosylation (arabinosylation) of the hydroxyproline Pro-76 enhances binding affinity of the CLE5p peptide for its receptor. In terms of tissue distribution, mostly expressed in roots, and, to a lower extent, in seedlings, stems, apex, flowers and siliques.

It localises to the secreted. The protein localises to the extracellular space. Functionally, extracellular signal peptide that regulates cell fate. The sequence is that of CLAVATA3/ESR (CLE)-related protein 5 from Arabidopsis thaliana (Mouse-ear cress).